A 156-amino-acid chain; its full sequence is Arginine repressor (156 aa).

The protein belongs to the ArgR family.

It localises to the cytoplasm. The protein operates within amino-acid biosynthesis; L-arginine biosynthesis [regulation]. Regulates arginine biosynthesis genes. This is Arginine repressor from Vibrio vulnificus (strain CMCP6).